Here is a 191-residue protein sequence, read N- to C-terminus: Protein GrpE (191 aa).

Positions M1–T14 are enriched in polar residues. The disordered stretch occupies residues M1 to T35. The segment covering E19–T35 has biased composition (low complexity).

The protein belongs to the GrpE family. Homodimer.

The protein resides in the cytoplasm. Functionally, participates actively in the response to hyperosmotic and heat shock by preventing the aggregation of stress-denatured proteins, in association with DnaK and GrpE. It is the nucleotide exchange factor for DnaK and may function as a thermosensor. Unfolded proteins bind initially to DnaJ; upon interaction with the DnaJ-bound protein, DnaK hydrolyzes its bound ATP, resulting in the formation of a stable complex. GrpE releases ADP from DnaK; ATP binding to DnaK triggers the release of the substrate protein, thus completing the reaction cycle. Several rounds of ATP-dependent interactions between DnaJ, DnaK and GrpE are required for fully efficient folding. The sequence is that of Protein GrpE from Cupriavidus taiwanensis (strain DSM 17343 / BCRC 17206 / CCUG 44338 / CIP 107171 / LMG 19424 / R1) (Ralstonia taiwanensis (strain LMG 19424)).